The following is a 607-amino-acid chain: CUB and zona pellucida-like domain-containing protein 1 (607 aa).

A signal peptide spans 1–24 (MELVRRLMPLTLLILSCLAELTMA). Cys-17 and Cys-58 are oxidised to a cystine. 2 consecutive CUB domains span residues 25-146 (EAEG…YFFS) and 154-265 (CGGY…YTSI). The Lumenal portion of the chain corresponds to 25–568 (EAEGNASCTV…EETPNQPFNS (544 aa)). Residues Asn-29, Asn-57, and Asn-67 are each glycosylated (N-linked (GlcNAc...) asparagine). Cystine bridges form between Cys-85–Cys-107, Cys-154–Cys-180, and Cys-207–Cys-229. Residues 276–519 (TCSSDRMRVI…SRCNQGCVSR (244 aa)) enclose the ZP domain. Residues Asn-394 and Asn-419 are each glycosylated (N-linked (GlcNAc...) asparagine). The cysteines at positions 442 and 498 are disulfide-linked. Residues 569 to 589 (VHLFSFMVLALNVVTVATITV) traverse the membrane as a helical segment. The Cytoplasmic portion of the chain corresponds to 590–607 (RHFVNQRADYKYQKLQNY).

In terms of tissue distribution, detected in pancreas and epithelium of ovary. Expressed at higher levels in ovarian tumors than in normal tissue.

It localises to the zymogen granule membrane. Functionally, localized to zymogen granules, where it functions in trypsinogen activation. May indirectly regulate cell motility, cell-cell and cell/extracellular matrix interactions. The sequence is that of CUB and zona pellucida-like domain-containing protein 1 from Homo sapiens (Human).